A 212-amino-acid polypeptide reads, in one-letter code: MSFFDKKQMITEEEALPGRNTRMPVAALHTVTGHSMTNVPEGMEVALFAMGCFWGVERLFWALPGVYSTAAGYTGGYTPNPTYREVCSGQTGHAEAVRVVYDPNVISYEQLLQVFWENHDPAQGMRQGNDVGTQYRSAIYPLTPEQEAAAQASLERFRAAMEAAGDYRHITTEIAPAKPFYYAEDEHQQYLHKNPYGYCGIGGIGVCLPPEA.

Residue cysteine 52 is part of the active site.

Belongs to the MsrA Met sulfoxide reductase family.

The catalysed reaction is L-methionyl-[protein] + [thioredoxin]-disulfide + H2O = L-methionyl-(S)-S-oxide-[protein] + [thioredoxin]-dithiol. The enzyme catalyses [thioredoxin]-disulfide + L-methionine + H2O = L-methionine (S)-S-oxide + [thioredoxin]-dithiol. In terms of biological role, has an important function as a repair enzyme for proteins that have been inactivated by oxidation. Catalyzes the reversible oxidation-reduction of methionine sulfoxide in proteins to methionine. The polypeptide is Peptide methionine sulfoxide reductase MsrA (Cronobacter sakazakii (strain ATCC BAA-894) (Enterobacter sakazakii)).